A 191-amino-acid polypeptide reads, in one-letter code: Probable nicotinate-nucleotide adenylyltransferase (191 aa).

Belongs to the NadD family.

It catalyses the reaction nicotinate beta-D-ribonucleotide + ATP + H(+) = deamido-NAD(+) + diphosphate. The protein operates within cofactor biosynthesis; NAD(+) biosynthesis; deamido-NAD(+) from nicotinate D-ribonucleotide: step 1/1. Its function is as follows. Catalyzes the reversible adenylation of nicotinate mononucleotide (NaMN) to nicotinic acid adenine dinucleotide (NaAD). This chain is Probable nicotinate-nucleotide adenylyltransferase, found in Oceanobacillus iheyensis (strain DSM 14371 / CIP 107618 / JCM 11309 / KCTC 3954 / HTE831).